The chain runs to 616 residues: Chaperone protein HscA (616 aa).

This sequence belongs to the heat shock protein 70 family.

Its function is as follows. Chaperone involved in the maturation of iron-sulfur cluster-containing proteins. Has a low intrinsic ATPase activity which is markedly stimulated by HscB. Involved in the maturation of IscU. This chain is Chaperone protein HscA, found in Salmonella arizonae (strain ATCC BAA-731 / CDC346-86 / RSK2980).